The following is a 431-amino-acid chain: MARNMNILTLFAVLLGSASAVYHPPSWTAWIAPKPWTAWKVPPPAWTAWKAHPPAWTAWKATPKPWTAWKAPPPAWTAWKATPKPWTAWKAPPPTWTAWKATPKPWTAWKAPPPVWTAWKATPKPRTAWKAPPPTWTAWKAAPKPWTAWKATPKPWTAWKAPPPAWTAWKATPKPWTAWKATPKPWTAWKATPKPWTAWKATPKPWTVWKATPKPWTAWKAPPPAWTAWKATPKPWTAWKAPPPAWTAWKATPKPWTAWKAPPPAWTAWKATPKPWTAWKATPKPWTAWKATPKPWTAWKATPKPWTAWRATPPPTWTAWHGHGYGGYGKPGKPGKPGSKGPRGPAGPPGATGKTGRTGATGKRGPPGYPGKPGVPGRNGYVHIVFDGYGKWEIGKIERKNIREAVAKAWTAWNAGHGHGWTAWTAPPAYG.

Residues 1 to 20 form the signal peptide; it reads MARNMNILTLFAVLLGSASA. Position 22 is a 3',4'-dihydroxyphenylalanine (Y22). P33 carries the 4-hydroxyproline modification. One copy of the A-1; approximate repeat lies at 41-50; the sequence is VPPPAWTAWK. The tract at residues 41 to 270 is 13 X 10 AA A-P-P-P-A-W-T-A-W-K; that stretch reads VPPPAWTAWK…APPPAWTAWK (230 aa). A 7'-hydroxytryptophan mark is found at W46, W49, W56, and W59. W46, W49, W56, and W59 each carry a C-linked (Man) hydroxytryptophan glycan. An A-2; approximate repeat occupies 51 to 60; that stretch reads AHPPAWTAWK. The stretch at 61–70 is one B-1 repeat; it reads ATPKPWTAWK. Positions 61–310 are 27 X 10 AA A-T-P-K-P-W-T-A-W-K; the sequence is ATPKPWTAWK…ATPKPWTAWR (250 aa). P65 is subject to 4-hydroxyproline. C-linked (Man) tryptophan glycosylation is present at W66. Residue W69 is modified to 7'-hydroxytryptophan. Residue W69 is glycosylated (C-linked (Man) hydroxytryptophan). The A-3 repeat unit spans residues 71–80; the sequence is APPPAWTAWK. 4-hydroxyproline is present on residues P72, P73, and P74. 7'-hydroxytryptophan is present on residues W76 and W79. W76 and W79 each carry a C-linked (Man) hydroxytryptophan glycan. Residues 81-90 form a B-2 repeat; the sequence is ATPKPWTAWK. The residue at position 85 (P85) is a 4-hydroxyproline. W86 carries C-linked (Man) tryptophan glycosylation. 7'-hydroxytryptophan is present on W89. A glycan (C-linked (Man) hydroxytryptophan) is linked at W89. The A-4; approximate repeat unit spans residues 91 to 100; it reads APPPTWTAWK. 4-hydroxyproline occurs at positions 92, 93, and 94. 7'-hydroxytryptophan occurs at positions 96 and 99. C-linked (Man) hydroxytryptophan glycans are attached at residues W96 and W99. The B-3 repeat unit spans residues 101–110; it reads ATPKPWTAWK. A 4-hydroxyproline modification is found at P105. W106 is a glycosylation site (C-linked (Man) tryptophan). W109 carries the 7'-hydroxytryptophan modification. C-linked (Man) hydroxytryptophan glycosylation is present at W109. The stretch at 111-120 is one A-5; approximate repeat; sequence APPPVWTAWK. P112, P113, and P114 each carry 4-hydroxyproline. 7'-hydroxytryptophan occurs at positions 116 and 119. 2 C-linked (Man) hydroxytryptophan glycosylation sites follow: W116 and W119. The stretch at 121 to 130 is one B-4; approximate repeat; the sequence is ATPKPRTAWK. P125 is subject to 4-hydroxyproline. 7'-hydroxytryptophan is present on W129. Residue W129 is glycosylated (C-linked (Man) hydroxytryptophan). The stretch at 131 to 140 is one A-6; approximate repeat; that stretch reads APPPTWTAWK. A 4-hydroxyproline mark is found at P132, P133, and P134. Residues W136 and W139 each carry the 7'-hydroxytryptophan modification. W136 and W139 each carry a C-linked (Man) hydroxytryptophan glycan. One copy of the B-5; approximate repeat lies at 141–150; that stretch reads AAPKPWTAWK. P145 is subject to 4-hydroxyproline. A glycan (C-linked (Man) tryptophan) is linked at W146. W149 carries the post-translational modification 7'-hydroxytryptophan. W149 carries C-linked (Man) hydroxytryptophan glycosylation. The stretch at 151–160 is one B-6 repeat; the sequence is ATPKPWTAWK. P155 is subject to 4-hydroxyproline. W156 carries C-linked (Man) tryptophan glycosylation. W159 bears the 7'-hydroxytryptophan mark. W159 carries a C-linked (Man) hydroxytryptophan glycan. The A-7 repeat unit spans residues 161-170; sequence APPPAWTAWK. 4-hydroxyproline is present on residues P162, P163, and P164. A 7'-hydroxytryptophan mark is found at W166 and W169. 2 C-linked (Man) hydroxytryptophan glycosylation sites follow: W166 and W169. The B-7 repeat unit spans residues 171–180; that stretch reads ATPKPWTAWK. Residue P175 is modified to 4-hydroxyproline. A C-linked (Man) tryptophan glycan is attached at W176. W179 is subject to 7'-hydroxytryptophan. C-linked (Man) hydroxytryptophan glycosylation is present at W179. One copy of the B-8 repeat lies at 181–190; sequence ATPKPWTAWK. P185 carries the post-translational modification 4-hydroxyproline. A glycan (C-linked (Man) tryptophan) is linked at W186. 7'-hydroxytryptophan is present on W189. W189 is a glycosylation site (C-linked (Man) hydroxytryptophan). A B-9 repeat occupies 191-200; that stretch reads ATPKPWTAWK. Residue P195 is modified to 4-hydroxyproline. C-linked (Man) tryptophan glycosylation occurs at W196. W199 carries the post-translational modification 7'-hydroxytryptophan. Residue W199 is glycosylated (C-linked (Man) hydroxytryptophan). The B-10; approximate repeat unit spans residues 201 to 210; the sequence is ATPKPWTVWK. Position 205 is a 4-hydroxyproline (P205). W206 carries a C-linked (Man) tryptophan glycan. Residue W209 is modified to 7'-hydroxytryptophan. W209 carries a C-linked (Man) hydroxytryptophan glycan. Residues 211-220 form a B-11 repeat; sequence ATPKPWTAWK. At P215 the chain carries 4-hydroxyproline. A glycan (C-linked (Man) tryptophan) is linked at W216. W219 carries the 7'-hydroxytryptophan modification. The C-linked (Man) hydroxytryptophan glycan is linked to W219. One copy of the A-8 repeat lies at 221-230; that stretch reads APPPAWTAWK. P222, P223, and P224 each carry 4-hydroxyproline. W226 and W229 each carry 7'-hydroxytryptophan. Residues W226 and W229 are each glycosylated (C-linked (Man) hydroxytryptophan). The stretch at 231-240 is one B-12 repeat; the sequence is ATPKPWTAWK. P235 bears the 4-hydroxyproline mark. A C-linked (Man) tryptophan glycan is attached at W236. At W239 the chain carries 7'-hydroxytryptophan. The C-linked (Man) hydroxytryptophan glycan is linked to W239. The stretch at 241–250 is one A-9 repeat; the sequence is APPPAWTAWK. P242, P243, and P244 each carry 4-hydroxyproline. W246 and W249 each carry 7'-hydroxytryptophan. Residues W246 and W249 are each glycosylated (C-linked (Man) hydroxytryptophan). The B-13 repeat unit spans residues 251 to 260; the sequence is ATPKPWTAWK. Residue P255 is modified to 4-hydroxyproline. W256 carries a C-linked (Man) tryptophan glycan. W259 is subject to 7'-hydroxytryptophan. The C-linked (Man) hydroxytryptophan glycan is linked to W259. Residues 261–270 form an A-10 repeat; it reads APPPAWTAWK. Residues P262, P263, and P264 each carry the 4-hydroxyproline modification. 7'-hydroxytryptophan is present on residues W266 and W269. C-linked (Man) hydroxytryptophan glycosylation is found at W266 and W269. The B-14 repeat unit spans residues 271-280; that stretch reads ATPKPWTAWK. The residue at position 275 (P275) is a 4-hydroxyproline. W276 is a glycosylation site (C-linked (Man) tryptophan). W279 carries the 7'-hydroxytryptophan modification. The C-linked (Man) hydroxytryptophan glycan is linked to W279. A B-15 repeat occupies 281-290; the sequence is ATPKPWTAWK. P285 is modified (4-hydroxyproline). W286 carries C-linked (Man) tryptophan glycosylation. W289 is modified (7'-hydroxytryptophan). W289 is a glycosylation site (C-linked (Man) hydroxytryptophan). Residues 291-300 form a B-16 repeat; sequence ATPKPWTAWK. 4-hydroxyproline is present on P295. W296 is a glycosylation site (C-linked (Man) tryptophan). 7'-hydroxytryptophan is present on W299. W299 carries a C-linked (Man) hydroxytryptophan glycan. One copy of the B-17; approximate repeat lies at 301–310; it reads ATPKPWTAWR. 4-hydroxyproline is present on P305. A glycan (C-linked (Man) tryptophan) is linked at W306. Position 309 is a 7'-hydroxytryptophan (W309). W309 carries C-linked (Man) hydroxytryptophan glycosylation. Residues 322-377 form a disordered region; the sequence is GHGYGGYGKPGKPGKPGSKGPRGPAGPPGATGKTGRTGATGKRGPPGYPGKPGVPG. Residues 323–332 are compositionally biased toward gly residues; that stretch reads HGYGGYGKPG. Residues 329–380 form the Collagen-like domain; that stretch reads GKPGKPGKPGSKGPRGPAGPPGATGKTGRTGATGKRGPPGYPGKPGVPGRNG. The span at 336-366 shows a compositional bias: low complexity; it reads KPGSKGPRGPAGPPGATGKTGRTGATGKRGP. Residues P367, P370, and P376 each carry the 4-hydroxyproline modification.

In terms of tissue distribution, produced by the byssal gland.

The protein localises to the secreted. In terms of biological role, provides adhesiveness to the mussel's foot. Mussels produce one of the strongest water insoluble glues. The mussel's adhesive is a bundle of threads, called a byssus, formed by a fibrous collagenous core coated with adhesive proteins. This Perna viridis (Asian green mussel) protein is Foot protein 1 variant 2.